A 999-amino-acid polypeptide reads, in one-letter code: Hypoxia up-regulated protein 1 (999 aa).

The N-terminal stretch at 1–32 (MADKVRRQRPRRRVCWALVAVLLADLLALSDT) is a signal peptide. Residues Asn155, Asn222, and Asn515 are each glycosylated (N-linked (GlcNAc...) asparagine). The residue at position 567 (Ser567) is a Phosphoserine. The interval 578 to 694 (GNTISSLFGG…KKQKPARKRR (117 aa)) is disordered. An N-linked (GlcNAc...) asparagine glycan is attached at Asn596. Composition is skewed to basic and acidic residues over residues 611–626 (GSKD…KEEA) and 641–672 (PKGD…KAEA). N-linked (GlcNAc...) asparagine glycans are attached at residues Asn830, Asn862, and Asn869. Lys883 carries the post-translational modification N6-acetyllysine. Positions 909 to 999 (AKFTKPRPRP…QKRPLKNDEL (91 aa)) are disordered. N-linked (GlcNAc...) asparagine glycans are attached at residues Asn922 and Asn931. Positions 996-999 (NDEL) match the Prevents secretion from ER motif.

It belongs to the heat shock protein 70 family. Part of a large chaperone multiprotein complex comprising DNAJB11, HSP90B1, HSPA5, HYOU, PDIA2, PDIA4, PDIA6, PPIB, SDF2L1, UGGT1 and very small amounts of ERP29, but not, or at very low levels, CALR nor CANX. Highly expressed in tissues that contain well-developed endoplasmic reticulum and synthesize large amounts of secretory proteins. Highly expressed in liver and pancreas and lower expression in brain and kidney. Also expressed in macrophages within aortic atherosclerotic plaques, and in breast cancers.

It localises to the endoplasmic reticulum lumen. Its function is as follows. Has a pivotal role in cytoprotective cellular mechanisms triggered by oxygen deprivation. Promotes HSPA5/BiP-mediated ATP nucleotide exchange and thereby activates the unfolded protein response (UPR) pathway in the presence of endoplasmic reticulum stress. May play a role as a molecular chaperone and participate in protein folding. This chain is Hypoxia up-regulated protein 1 (HYOU1), found in Homo sapiens (Human).